A 325-amino-acid chain; its full sequence is Basic membrane protein A (325 aa).

The first 3 residues, 1-3, serve as a signal peptide directing secretion; the sequence is FLS. Cys-4 is lipidated: N-palmitoyl cysteine. Cys-4 carries the S-diacylglycerol cysteine lipid modification.

Belongs to the BMP lipoprotein family. As to quaternary structure, monomer.

Its subcellular location is the cell inner membrane. Its function is as follows. Immunogenic protein. May be part of an ABC-type nucleoside uptake system involved in the purine salvage pathway. The polypeptide is Basic membrane protein A (bmpA) (Borreliella afzelii (Borrelia afzelii)).